Reading from the N-terminus, the 31-residue chain is Cyclotide cter-D (31 aa).

A cross-link (cyclopeptide (Gly-Asn)) is located at residues 1-31 (GIPCAESCVWIPCTVTALLGCSCKDKVCYLN). 3 cysteine pairs are disulfide-bonded: cysteine 4–cysteine 21, cysteine 8–cysteine 23, and cysteine 13–cysteine 28.

Contains 3 disulfide bonds. In terms of processing, this is a cyclic peptide. In terms of tissue distribution, expressed in root, seed and nodule but not in flower, stem, shoot, leaf and pod.

Functionally, probably participates in a plant defense mechanism. This chain is Cyclotide cter-D, found in Clitoria ternatea (Butterfly pea).